A 226-amino-acid polypeptide reads, in one-letter code: uncharacterized protein (226 aa).

The RNase H type-1 domain occupies 71–207; it reads EPDDITVYFD…ADGLAKKILS (137 aa).

This is an uncharacterized protein from Bacillus subtilis (strain 168).